Here is a 66-residue protein sequence, read N- to C-terminus: Beta-mammal toxin Cv3 (66 aa).

In terms of domain architecture, LCN-type CS-alpha/beta spans 1 to 66 (KEGYIVNYYD…VWPLPNKTCN (66 aa)). 4 disulfides stabilise this stretch: cysteine 12-cysteine 65, cysteine 16-cysteine 41, cysteine 25-cysteine 46, and cysteine 29-cysteine 48.

As to expression, expressed by the venom gland.

The protein localises to the secreted. Functionally, beta toxins bind voltage-independently at site-4 of sodium channels (Nav) and reduces peak current and shifts the voltage of activation toward more negative potentials thereby affecting sodium channel activation and promoting spontaneous and repetitive firing. This toxin is strongly toxic to mice. This chain is Beta-mammal toxin Cv3, found in Centruroides villegasi (Scorpion).